The following is a 305-amino-acid chain: Polyamine aminopropyltransferase 2 (305 aa).

The PABS domain maps to 7–242 (WRFVAEWTSE…GLWGFVAASD (236 aa)). Residue Q36 participates in S-methyl-5'-thioadenosine binding. 2 residues coordinate spermidine: H67 and E91. Residues D111 and 143–144 (DG) each bind S-methyl-5'-thioadenosine. The active-site Proton acceptor is the D161. P170 contributes to the S-methyl-5'-thioadenosine binding site.

It belongs to the spermidine/spermine synthase family. In terms of assembly, homodimer or homotetramer.

It localises to the cytoplasm. The catalysed reaction is S-adenosyl 3-(methylsulfanyl)propylamine + propane-1,3-diamine = norspermidine + S-methyl-5'-thioadenosine + H(+). Its function is as follows. Involved in the biosynthesis of polyamines which are thought to support the growth of thermophilic microorganisms under high-temperature conditions. It seems that long-chain and branched-chain of polyamines effectively stabilize DNA and RNA, respectively. Catalyzes the irreversible transfer of a propylamine group from the amino donor S-adenosylmethioninamine (decarboxy-AdoMet) to 1,3-diaminopropane to yield sym-norspermidine (bis(3-aminopropyl)amine). It can also synthesize thermospermine from spermidine with a very low activity. The chain is Polyamine aminopropyltransferase 2 from Hyperthermus butylicus (strain DSM 5456 / JCM 9403 / PLM1-5).